The following is a 465-amino-acid chain: Ribulose bisphosphate carboxylase large chain (465 aa).

The residue at position 4 (K4) is an N6,N6,N6-trimethyllysine. N113 and T163 together coordinate substrate. The active-site Proton acceptor is K165. K167 provides a ligand contact to substrate. Positions 191, 193, and 194 each coordinate Mg(2+). N6-carboxylysine is present on K191. The active-site Proton acceptor is the H284. The substrate site is built by R285, H317, and S369.

The protein belongs to the RuBisCO large chain family. Type I subfamily. In terms of assembly, heterohexadecamer of 8 large chains and 8 small chains; disulfide-linked. The disulfide link is formed within the large subunit homodimers. It depends on Mg(2+) as a cofactor. In terms of processing, the disulfide bond which can form in the large chain dimeric partners within the hexadecamer appears to be associated with oxidative stress and protein turnover.

The protein localises to the plastid. The protein resides in the chloroplast. It catalyses the reaction 2 (2R)-3-phosphoglycerate + 2 H(+) = D-ribulose 1,5-bisphosphate + CO2 + H2O. The catalysed reaction is D-ribulose 1,5-bisphosphate + O2 = 2-phosphoglycolate + (2R)-3-phosphoglycerate + 2 H(+). In terms of biological role, ruBisCO catalyzes two reactions: the carboxylation of D-ribulose 1,5-bisphosphate, the primary event in carbon dioxide fixation, as well as the oxidative fragmentation of the pentose substrate in the photorespiration process. Both reactions occur simultaneously and in competition at the same active site. The protein is Ribulose bisphosphate carboxylase large chain of Cornus florida (Flowering dogwood).